A 99-amino-acid chain; its full sequence is Bombyxin A-1 homolog (99 aa).

Positions 1–19 (MKTQVLFLVFALAAVMVSG) are cleaved as a signal peptide. 3 disulfides stabilise this stretch: Cys-27-Cys-86, Cys-39-Cys-99, and Cys-85-Cys-90. The propeptide at 48 to 76 (TPYISPENEGYGWRWLEPQRARQLDGARG) is c peptide like.

This sequence belongs to the insulin family. In terms of assembly, heterodimer of a B chain and an A chain linked by two disulfide bonds.

The protein resides in the secreted. Functionally, brain peptide responsible for activation of prothoracic glands to produce ecdysone in insects. This is Bombyxin A-1 homolog (SBXA1) from Samia cynthia (Ailanthus silkmoth).